A 474-amino-acid polypeptide reads, in one-letter code: Phenylalanine--tRNA ligase alpha subunit (474 aa).

L-phenylalanine-binding positions include Thr317, 356–358, and Tyr396; that span reads QLE. Mg(2+) is bound at residue Glu398. Phe421 is a binding site for L-phenylalanine.

It belongs to the class-II aminoacyl-tRNA synthetase family. Phe-tRNA synthetase alpha subunit type 2 subfamily. As to quaternary structure, tetramer of two alpha and two beta subunits. It depends on Mg(2+) as a cofactor.

Its subcellular location is the cytoplasm. The enzyme catalyses tRNA(Phe) + L-phenylalanine + ATP = L-phenylalanyl-tRNA(Phe) + AMP + diphosphate + H(+). The sequence is that of Phenylalanine--tRNA ligase alpha subunit from Archaeoglobus fulgidus (strain ATCC 49558 / DSM 4304 / JCM 9628 / NBRC 100126 / VC-16).